The chain runs to 75 residues: Large ribosomal subunit protein bL31 (75 aa).

Residues cysteine 16, cysteine 18, cysteine 38, and cysteine 41 each contribute to the Zn(2+) site.

It belongs to the bacterial ribosomal protein bL31 family. Type A subfamily. Part of the 50S ribosomal subunit. Zn(2+) serves as cofactor.

Binds the 23S rRNA. The chain is Large ribosomal subunit protein bL31 from Nocardioides sp. (strain ATCC BAA-499 / JS614).